Reading from the N-terminus, the 564-residue chain is Pyranose 2-oxidase (564 aa).

Residues 1 to 25 (MPIRLSKEKINDLLQRSQGDLTSSQ) constitute a propeptide that is removed on maturation. Residue His158 is modified to Tele-8alpha-FAD histidine. 2 residues coordinate substrate: Gln392 and His394. Residue His498 is the Proton acceptor of the active site. The active site involves Asn541.

Belongs to the GMC oxidoreductase family. Homotetramer. FAD is required as a cofactor.

The catalysed reaction is D-glucose + O2 = 2-dehydro-D-glucose + H2O2. Functionally, catalyzes the oxidation of various aldopyranoses and disaccharides on carbon-2 to the corresponding 2-keto sugars concomitant with the reduction of O(2) to H(2)O(2). The preferred substrate is D-glucose which is converted to 2-dehydro-D-glucose. Acts also on D-xylose, L-sorbose, D-galactose and 1,5-anhydroglucitol, a diagnostic marker of diabetes mellitus. The polypeptide is Pyranose 2-oxidase (p2ox) (Tricholoma matsutake (Matsutake mushroom)).